A 300-amino-acid polypeptide reads, in one-letter code: MKEDRIVFIFGPTAVGKSNILFHFPRNKAEIINVDSIQVYKEFNIASSKPGKSLMKHIKHHLVDFLEPEKEYTLGIFYEQALKIVKEIRQKKKIPIFVGGTAFYFKHLKDGFPSTPLVTSKIRIYVNNLLDLKGKSHLLKELKNVDPIRFNMLNKNDIYRIKRSLEVYYQTGIPISQFQKKQNSEFKNILIVGLKRSFEDLKTRISIRINEMLNSGLLSEIKGLFSKGYNENTPAFKGIGYNEFLLWKSRPWYSLNDIISLINKNSVLYAKRQMTFFAKMPDVLWFHPEDDLDDILNLIF.

ATP is bound at residue 11–18 (GPTAVGKS). Residue 13-18 (TAVGKS) participates in substrate binding. Positions 35 to 38 (DSIQ) are interaction with substrate tRNA.

Belongs to the IPP transferase family. As to quaternary structure, monomer. Mg(2+) is required as a cofactor.

The catalysed reaction is adenosine(37) in tRNA + dimethylallyl diphosphate = N(6)-dimethylallyladenosine(37) in tRNA + diphosphate. In terms of biological role, catalyzes the transfer of a dimethylallyl group onto the adenine at position 37 in tRNAs that read codons beginning with uridine, leading to the formation of N6-(dimethylallyl)adenosine (i(6)A). The polypeptide is tRNA dimethylallyltransferase (Borreliella afzelii (strain PKo) (Borrelia afzelii)).